The chain runs to 556 residues: Glutamine--tRNA ligase (556 aa).

The 'HIGH' region signature appears at 34 to 44 (PEPNGYLHIGH). ATP-binding positions include 35-37 (EPN) and 41-47 (HIGHAKS). Positions 67 and 212 each coordinate L-glutamine. ATP-binding positions include threonine 231, 261–262 (RL), and 269–271 (MSK). The 'KMSKS' region motif lies at 268–272 (VMSKR).

The protein belongs to the class-I aminoacyl-tRNA synthetase family. Monomer.

Its subcellular location is the cytoplasm. It carries out the reaction tRNA(Gln) + L-glutamine + ATP = L-glutaminyl-tRNA(Gln) + AMP + diphosphate. In Vibrio parahaemolyticus serotype O3:K6 (strain RIMD 2210633), this protein is Glutamine--tRNA ligase.